Reading from the N-terminus, the 271-residue chain is Interleukin-1 alpha (271 aa).

Positions 1-112 (MAKVPDMFED…DSEEEIIKPR (112 aa)) are excised as a propeptide. Lys-82 is modified (N6-acetyllysine). Residues 82–86 (KKRRL) are nuclear localization signal (NLS). Ser-87 bears the Phosphoserine mark. Asn-102 and Asn-141 each carry an N-linked (GlcNAc...) asparagine glycan.

This sequence belongs to the IL-1 family. As to quaternary structure, monomer. Interacts with TMED10; the interaction mediates the translocation from the cytoplasm into the ERGIC (endoplasmic reticulum-Golgi intermediate compartment) and thereby secretion. Interacts with IL1R1. Interacts with S100A13; this interaction is the first step in the export of IL1A, followed by direct translocation of this complex across the plasma membrane. In terms of processing, acetylated within its nuclear localization sequence, which impacts subcellular localization. Proteolytic processed by CAPN1 in a calcium-dependent manner. Cleavage from 31 kDa precursor to 18 kDa biologically active molecules. Post-translationally, phosphorylated. Phosphorylation greatly enhances susceptibility to digestion and promotes the conversion of pre-IL1A alpha to the biologically active IL1A.

The protein localises to the nucleus. The protein resides in the cytoplasm. It is found in the secreted. In terms of biological role, cytokine constitutively present intracellularly in nearly all resting non-hematopoietic cells that plays an important role in inflammation and bridges the innate and adaptive immune systems. After binding to its receptor IL1R1 together with its accessory protein IL1RAP, forms the high affinity interleukin-1 receptor complex. Signaling involves the recruitment of adapter molecules such as MYD88, IRAK1 or IRAK4. In turn, mediates the activation of NF-kappa-B and the three MAPK pathways p38, p42/p44 and JNK pathways. Within the cell, acts as an alarmin and cell death results in its liberation in the extracellular space after disruption of the cell membrane to induce inflammation and alert the host to injury or damage. In addition to its role as a danger signal, which occurs when the cytokine is passively released by cell necrosis, directly senses DNA damage and acts as signal for genotoxic stress without loss of cell integrity. The protein is Interleukin-1 alpha (IL1A) of Cercocebus atys (Sooty mangabey).